A 129-amino-acid chain; its full sequence is Small ribosomal subunit protein uS12 (129 aa).

The interval 110–129 (RKQGRSRYGAHRKQVAATKK) is disordered.

It belongs to the universal ribosomal protein uS12 family. Part of the 30S ribosomal subunit. Contacts proteins S8 and S17. May interact with IF1 in the 30S initiation complex.

In terms of biological role, with S4 and S5 plays an important role in translational accuracy. Interacts with and stabilizes bases of the 16S rRNA that are involved in tRNA selection in the A site and with the mRNA backbone. Located at the interface of the 30S and 50S subunits, it traverses the body of the 30S subunit contacting proteins on the other side and probably holding the rRNA structure together. The combined cluster of proteins S8, S12 and S17 appears to hold together the shoulder and platform of the 30S subunit. The polypeptide is Small ribosomal subunit protein uS12 (Rickettsia prowazekii (strain Madrid E)).